The primary structure comprises 167 residues: Lipoprotein signal peptidase (167 aa).

3 helical membrane passes run Ala9–Leu29, Leu68–Tyr88, and Met98–Val118. Residues Asp120 and Asp138 contribute to the active site. A helical membrane pass occupies residues Tyr130–Leu150.

Belongs to the peptidase A8 family.

Its subcellular location is the cell inner membrane. It catalyses the reaction Release of signal peptides from bacterial membrane prolipoproteins. Hydrolyzes -Xaa-Yaa-Zaa-|-(S,diacylglyceryl)Cys-, in which Xaa is hydrophobic (preferably Leu), and Yaa (Ala or Ser) and Zaa (Gly or Ala) have small, neutral side chains.. It functions in the pathway protein modification; lipoprotein biosynthesis (signal peptide cleavage). Its function is as follows. This protein specifically catalyzes the removal of signal peptides from prolipoproteins. The sequence is that of Lipoprotein signal peptidase from Aquifex aeolicus (strain VF5).